The following is a 562-amino-acid chain: Arginine--tRNA ligase (562 aa).

The 'HIGH' region motif lies at 136-146; that stretch reads ANPTGPMHMGN.

The protein belongs to the class-I aminoacyl-tRNA synthetase family. Monomer.

The protein resides in the cytoplasm. The enzyme catalyses tRNA(Arg) + L-arginine + ATP = L-arginyl-tRNA(Arg) + AMP + diphosphate. The polypeptide is Arginine--tRNA ligase (argS) (Caldanaerobacter subterraneus subsp. tengcongensis (strain DSM 15242 / JCM 11007 / NBRC 100824 / MB4) (Thermoanaerobacter tengcongensis)).